Here is a 47-residue protein sequence, read N- to C-terminus: Defensin NsD7 (47 aa).

4 disulfide bridges follow: cysteine 3/cysteine 47, cysteine 14/cysteine 34, cysteine 20/cysteine 41, and cysteine 24/cysteine 43. Positions 4, 33, 36, and 39 each coordinate a 1,2-diacyl-sn-glycero-3-phosphate.

It belongs to the DEFL family. In the presence of phosphatidic acid (PA), forms right-handed double helices which tend to bundle into fibrils. Each helix is a repetition of dimers containing 2 bound molecules of PA per dimer. Dimers are arranged orthogonally in a tip-to-tip configuration with 1 molecule of PA located at the dimer contact interface. Association of 2 helices to form a double helix depends on intercalating isoleucine residues Ile-15 and Ile-37. Bundling of double helices into fibrils depends on Arg-26.

It is found in the vacuole. Plant defense peptide. Disrupts membranes containing phosphatidic acid (PA) via a PA-dependent oligomerization process. In Nicotiana suaveolens (Australian tobacco), this protein is Defensin NsD7.